Here is a 232-residue protein sequence, read N- to C-terminus: MAKLGKRTRAAREAFAGKSNLTIEEAVALVKANATTKFDETVEIAMNLGVDTRHADQMVRGVVGLPNGTGKTMRVAVFARGPKADEAKEAGADIVGAEDLMETIQGGTIDFDRCIATPDMMPVVGRLGKVLGPRNLMPNPKVGTVTMDVKAAVEAAKGGEVQFKAEKGGVVHAGVGKASFDEAKLVENVRAFVSAVAKAKPSGAKGAYMKKIVLSSTMGPGVTLDVDGAVSE.

Belongs to the universal ribosomal protein uL1 family. In terms of assembly, part of the 50S ribosomal subunit.

Functionally, binds directly to 23S rRNA. The L1 stalk is quite mobile in the ribosome, and is involved in E site tRNA release. Protein L1 is also a translational repressor protein, it controls the translation of the L11 operon by binding to its mRNA. The polypeptide is Large ribosomal subunit protein uL1 (Ruegeria sp. (strain TM1040) (Silicibacter sp.)).